We begin with the raw amino-acid sequence, 206 residues long: Guanylate kinase (206 aa).

In terms of domain architecture, Guanylate kinase-like spans 5–183 (FNLLILSGPS…SKEIILSIAK (179 aa)). 12 to 19 (GPSGAGKS) contacts ATP.

This sequence belongs to the guanylate kinase family.

It is found in the cytoplasm. It catalyses the reaction GMP + ATP = GDP + ADP. Its function is as follows. Essential for recycling GMP and indirectly, cGMP. The sequence is that of Guanylate kinase from Helicobacter pylori (strain HPAG1).